We begin with the raw amino-acid sequence, 417 residues long: Nucleosome assembly protein (417 aa).

The disordered stretch occupies residues 1 to 47; sequence MSDPIRTKPKSSMQIDNAPTPHNTPASVLNPSYLKNGNPVRAQAQEQ. The span at 10–35 shows a compositional bias: polar residues; sequence KSSMQIDNAPTPHNTPASVLNPSYLK. Thr-20 and Thr-24 each carry phosphothreonine. Ser-27 is subject to Phosphoserine. Lys-50 is covalently cross-linked (Glycyl lysine isopeptide (Lys-Gly) (interchain with G-Cter in ubiquitin)). Thr-53 is modified (phosphothreonine). Ser-69, Ser-76, Ser-82, Ser-98, Ser-104, and Ser-140 each carry phosphoserine. The tract at residues 143-362 is interaction with NBA1; it reads EQPKPEQIAK…IPRAVDWFTG (220 aa). Phosphoserine; by CK2 occurs at positions 159 and 177. The segment at residues 330-356 is a DNA-binding region (H-T-H motif); the sequence is LEEDLEERLALDYSIGEQLKDKLIPRA. Positions 364-417 are disordered; the sequence is ALEFEFEEDEEEADEDEDEEEDDDHGLEDDDGESAEEQDDFAGRPEQAPECKQS. The span at 367-403 shows a compositional bias: acidic residues; that stretch reads FEFEEDEEEADEDEDEEEDDDHGLEDDDGESAEEQDD. At Ser-397 the chain carries Phosphoserine; by CK2. Residues 404–417 are compositionally biased toward basic and acidic residues; the sequence is FAGRPEQAPECKQS.

The protein belongs to the nucleosome assembly protein (NAP) family. Component of the GIN4 complex composed of at least BNI5, CDC3, CDC10, CDC11, CDC12, GIN4, NAP1 and SHS1 which forms a ring at the bud neck. Homodimer (in-vitro). Interacts with the B-type cyclin CLB2. Interacts with 60S ribosomal protein L18 (RPL18A or RPL18B), CKA2, CKI1, eukaryotic elongation factor 1 complex eEF1A (TEF1 or TEF2), FOL1, HSC82, HTA2, HTB2, HTZ1, KAP114, KCC4, NIS1, SSA1, SSA2, SSB1, SSC1, SHM1, SIP5 and TCO89. Interacts with NBA1. Interacts with histone H3/H4 heterodimers. Post-translationally, phosphorylation by CK2 is required for normal progression through S phase. CK2 phosphorylation is not required for correct bud formation nor histone binding.

It localises to the cytoplasm. The protein localises to the nucleus. Its subcellular location is the bud neck. In terms of biological role, acidic protein, which assembles histones into an octamer (in vitro). Involved in the regulation of the localization and the function of the septins during mitosis. Involved in the function of B-type cyclins. In Saccharomyces cerevisiae (strain ATCC 204508 / S288c) (Baker's yeast), this protein is Nucleosome assembly protein.